We begin with the raw amino-acid sequence, 544 residues long: uncharacterized protein (544 aa).

This is an uncharacterized protein from Acanthamoeba polyphaga mimivirus (APMV).